Reading from the N-terminus, the 245-residue chain is 2-C-methyl-D-erythritol 4-phosphate cytidylyltransferase (245 aa).

Belongs to the IspD/TarI cytidylyltransferase family. IspD subfamily.

The catalysed reaction is 2-C-methyl-D-erythritol 4-phosphate + CTP + H(+) = 4-CDP-2-C-methyl-D-erythritol + diphosphate. The protein operates within isoprenoid biosynthesis; isopentenyl diphosphate biosynthesis via DXP pathway; isopentenyl diphosphate from 1-deoxy-D-xylulose 5-phosphate: step 2/6. Its function is as follows. Catalyzes the formation of 4-diphosphocytidyl-2-C-methyl-D-erythritol from CTP and 2-C-methyl-D-erythritol 4-phosphate (MEP). The sequence is that of 2-C-methyl-D-erythritol 4-phosphate cytidylyltransferase from Chloroherpeton thalassium (strain ATCC 35110 / GB-78).